The sequence spans 216 residues: Adenylate kinase (216 aa).

An ATP-binding site is contributed by 10 to 15; that stretch reads GAGKGT. Residues 30–59 form an NMP region; sequence STGDMLRAAVKAGTELGIKAKSIMDAGGLV. AMP-binding positions include T31, R36, 57–59, 85–88, and Q92; these read GLV and GFPR. The LID stretch occupies residues 122-159; it reads GRRVHEASGRVYHIVYNPPKIAGKDDITGEELVQRKDD. ATP-binding positions include R123 and 132 to 133; that span reads VY. AMP is bound by residues R156 and R167. G202 serves as a coordination point for ATP.

Belongs to the adenylate kinase family. Monomer.

The protein resides in the cytoplasm. It catalyses the reaction AMP + ATP = 2 ADP. Its pathway is purine metabolism; AMP biosynthesis via salvage pathway; AMP from ADP: step 1/1. Functionally, catalyzes the reversible transfer of the terminal phosphate group between ATP and AMP. Plays an important role in cellular energy homeostasis and in adenine nucleotide metabolism. The sequence is that of Adenylate kinase from Pseudomonas fluorescens (strain Pf0-1).